A 469-amino-acid polypeptide reads, in one-letter code: DNA (cytosine-5-)-methyltransferase M.ApeKI (469 aa).

Positions 4–469 (YSTISLFSGA…EALAEVLDAV (466 aa)) constitute an SAM-dependent MTase C5-type domain. The active site involves Cys-93.

It belongs to the class I-like SAM-binding methyltransferase superfamily. C5-methyltransferase family.

The catalysed reaction is a 2'-deoxycytidine in DNA + S-adenosyl-L-methionine = a 5-methyl-2'-deoxycytidine in DNA + S-adenosyl-L-homocysteine + H(+). Cytosine methylase that recognizes the double-stranded sequence 5'-GC(A/T)GC-3', methylates C-5 position of the second cytosine on both strands, and protects the DNA from cleavage by the ApeKI endonuclease. In Aeropyrum pernix (strain ATCC 700893 / DSM 11879 / JCM 9820 / NBRC 100138 / K1), this protein is DNA (cytosine-5-)-methyltransferase M.ApeKI.